We begin with the raw amino-acid sequence, 413 residues long: Peptidase T (413 aa).

A Zn(2+)-binding site is contributed by histidine 82. Aspartate 84 is an active-site residue. Zn(2+) is bound at residue aspartate 144. Glutamate 178 acts as the Proton acceptor in catalysis. The Zn(2+) site is built by glutamate 179, aspartate 201, and histidine 383.

The protein belongs to the peptidase M20B family. In terms of assembly, homotrimer. Zn(2+) serves as cofactor.

The protein localises to the cytoplasm. The enzyme catalyses Release of the N-terminal residue from a tripeptide.. With respect to regulation, totally inhibited by EDTA, EGTA, and 1,10-phenanthroline. Strongly inhibited by divalent cations such as Cu(2+), Cd(2+), Co(2+) and Mn(2+). Partially inhibited by the reducing agents 2-mercaptoethanol and dithiothreitol. In terms of biological role, cleaves the N-terminal amino acid of tripeptides. Shows broad substrate specificity, exhibiting maximum activity against hydrophobic tripeptides, with the highest activity for Met-Gly-Gly. Therefore this enzyme may play an important role in flavor formation during cheese ripening. Is also able to slowly hydrolyze some hydrophobic dipeptides, but displays no activity against tetrapeptides and the tripeptide Phe-Gly-Gly. This chain is Peptidase T (pepT), found in Lactobacillus helveticus (Lactobacillus suntoryeus).